Reading from the N-terminus, the 698-residue chain is ATP-dependent RNA helicase DHX33 (698 aa).

Disordered regions lie at residues 1 to 20 (MPEE…SCPP) and 29 to 50 (TAGG…AQPS). Positions 1-71 (MPEEASLPPA…RRSLPIFRAR (71 aa)) are required for nucleolar location. A compositionally biased stretch (gly residues) spans 30-40 (AGGGGGAGGGR). The Helicase ATP-binding domain maps to 75-243 (LAQLRNLDNA…FNRAPVLYLE (169 aa)). 88–95 (GETGSGKT) is a binding site for ATP. The DEAH box motif lies at 185–188 (DEAH). A Helicase C-terminal domain is found at 271–441 (QIHQEAPASQ…SVILQLLAMK (171 aa)). Positions 462-553 (AIAQLDLLGA…ISSEGDHITL (92 aa)) are HA2; required for interaction with EIF3G and RPL26. A Critical for rDNA-binding motif is present at residues 536–550 (VQSVRKKFISSEGDH).

The protein belongs to the DEAD box helicase family. DEAH subfamily. Interacts with UBTF. Interacts with DDX3X, EIF3G and EIF3H; the interaction is independent of RNA. Interacts (via HA2 region and Helicase C-terminal domain) with the components of the large ribosomal subunit RPL3, RPL7, RPL26 and RPL27. Binds to mRNA. Interacts (via the helicase C-terminal domain) with MAVS. Binds to double-stranded RNA (via the helicase C-terminal domain). Ubiquitinated, leading to its degradation by the proteasome. Deubiquitinated by USP36.

The protein resides in the nucleus. It localises to the nucleolus. Its subcellular location is the nucleoplasm. It is found in the cytoplasm. The protein localises to the inflammasome. The enzyme catalyses ATP + H2O = ADP + phosphate + H(+). Implicated in nucleolar organization, ribosome biogenesis, protein synthesis and cytoplasmic dsRNA sensing. Stimulates RNA polymerase I transcription of the 47S precursor rRNA. Associates with ribosomal DNA (rDNA) loci where it is involved in POLR1A recruitment. In the cytoplasm, promotes elongation-competent 80S ribosome assembly at the late stage of mRNA translation initiation. Senses cytosolic dsRNA mediating NLRP3 inflammasome formation in macrophages and type I interferon production in myeloid dendritic cells. Required for NLRP3 activation induced by viral dsRNA and bacterial RNA. In dendritic cells, required for induction of type I interferon production induced by cytoplasmic dsRNA via the activation of MAPK and NF-kappa-B signaling pathways. In Mus musculus (Mouse), this protein is ATP-dependent RNA helicase DHX33.